The chain runs to 296 residues: 4-diphosphocytidyl-2-C-methyl-D-erythritol kinase (296 aa).

Lys11 is an active-site residue. 96–106 (PVSSGLAGGSA) contributes to the ATP binding site. Asp136 is a catalytic residue.

It belongs to the GHMP kinase family. IspE subfamily.

It carries out the reaction 4-CDP-2-C-methyl-D-erythritol + ATP = 4-CDP-2-C-methyl-D-erythritol 2-phosphate + ADP + H(+). The protein operates within isoprenoid biosynthesis; isopentenyl diphosphate biosynthesis via DXP pathway; isopentenyl diphosphate from 1-deoxy-D-xylulose 5-phosphate: step 3/6. Catalyzes the phosphorylation of the position 2 hydroxy group of 4-diphosphocytidyl-2C-methyl-D-erythritol. This chain is 4-diphosphocytidyl-2-C-methyl-D-erythritol kinase, found in Anaplasma phagocytophilum (strain HZ).